The sequence spans 184 residues: Ethylene-responsive transcription factor ERF024 (184 aa).

Positions 1–21 (MQGTSKDNGGRHPLYRGVRQR) are disordered. The segment at residues 14-72 (LYRGVRQRKNSNKWVSEIREPRKPNRIWLGTFSTPEMAAIAYDVAALALKGSQAELNFP) is a DNA-binding region (AP2/ERF).

Belongs to the AP2/ERF transcription factor family. ERF subfamily.

Its subcellular location is the nucleus. In terms of biological role, probably acts as a transcriptional activator. Binds to the GCC-box pathogenesis-related promoter element. May be involved in the regulation of gene expression by stress factors and by components of stress signal transduction pathways. In Arabidopsis thaliana (Mouse-ear cress), this protein is Ethylene-responsive transcription factor ERF024 (ERF024).